The primary structure comprises 631 residues: Plastidic ATP/ADP-transporter (631 aa).

The next 11 helical transmembrane spans lie at 106–126 (IELVTLKKIIPLGAMFFCILF), 149–169 (IIPFLKTWVNLPMAIGFMLLY), 180–200 (ALFYTVILPFIAFFGAFGFVL), 238–258 (LFYVMAELWGSVVVSVLFWGF), 271–290 (FYPLFGLGANVALIFSGRTV), 313–333 (GMMSIVVMMGGAICFFYWWVN), 369–389 (LATLVVAYGISINLVEVTWKS), 407–427 (DFSTATGIATFTMMLLSQWIF), 442–462 (VLLLTGVGFFSLLLFGAPLAP), 465–485 (AKFGMTPLLAAVYVGAMQNIF), and 543–563 (LASSTPYLGGVLLVIVLAWLG). Residues 586 to 631 (ERASLKIPVVSQNENGNGPLSSESSLNPAGGDSTNASSEPSSPRSL) form a disordered region. Over residues 595–631 (VSQNENGNGPLSSESSLNPAGGDSTNASSEPSSPRSL) the composition is skewed to polar residues.

The protein belongs to the ADP/ATP translocase tlc (TC 2.A.12.2) family.

The protein resides in the plastid. It localises to the chloroplast membrane. The chain is Plastidic ATP/ADP-transporter from Solanum tuberosum (Potato).